A 231-amino-acid polypeptide reads, in one-letter code: Elongation factor 1-delta 2 (231 aa).

An N-acetylalanine modification is found at Ala-2. The region spanning 11-73 (SGLKKLDEHL…LRISGVSAEG (63 aa)) is the GST C-terminal domain. The disordered stretch occupies residues 82–136 (SPITEEAVATPPAADSKDTAAEEEDDDDVDLFGEETEEEKKAAEERAASVKASTK). Residues 102–118 (AEEEDDDDVDLFGEETE) are compositionally biased toward acidic residues. Positions 119-129 (EEKKAAEERAA) are enriched in basic and acidic residues.

This sequence belongs to the EF-1-beta/EF-1-delta family. EF-1 is composed of 4 subunits: alpha, beta (1B-alpha=beta'), delta (1B-beta), and gamma (1B-gamma).

EF-1-beta and EF-1-delta stimulate the exchange of GDP bound to EF-1-alpha to GTP. The protein is Elongation factor 1-delta 2 of Arabidopsis thaliana (Mouse-ear cress).